The primary structure comprises 378 residues: Glutamate 5-kinase (378 aa).

Lys-14 provides a ligand contact to ATP. Positions 54, 141, and 153 each coordinate substrate. 173-174 (SD) contacts ATP. Residues 279–356 (AGRLTVDAGA…DEISEILGYD (78 aa)) enclose the PUA domain.

It belongs to the glutamate 5-kinase family.

The protein resides in the cytoplasm. It carries out the reaction L-glutamate + ATP = L-glutamyl 5-phosphate + ADP. It participates in amino-acid biosynthesis; L-proline biosynthesis; L-glutamate 5-semialdehyde from L-glutamate: step 1/2. In terms of biological role, catalyzes the transfer of a phosphate group to glutamate to form L-glutamate 5-phosphate. The sequence is that of Glutamate 5-kinase from Brucella anthropi (strain ATCC 49188 / DSM 6882 / CCUG 24695 / JCM 21032 / LMG 3331 / NBRC 15819 / NCTC 12168 / Alc 37) (Ochrobactrum anthropi).